Reading from the N-terminus, the 152-residue chain is Arginine repressor (152 aa).

This sequence belongs to the ArgR family.

It localises to the cytoplasm. Its pathway is amino-acid biosynthesis; L-arginine biosynthesis [regulation]. Its function is as follows. Regulates arginine biosynthesis genes. This chain is Arginine repressor, found in Caldicellulosiruptor saccharolyticus (strain ATCC 43494 / DSM 8903 / Tp8T 6331).